A 141-amino-acid polypeptide reads, in one-letter code: Cystatin-SA (141 aa).

An N-terminal signal peptide occupies residues M1–A20. The Secondary area of contact motif lies at Q76–G80. Intrachain disulfides connect C94/C104 and C118/C138.

In terms of tissue distribution, expressed in submandibular and sublingual saliva but not in parotid saliva (at protein level). Expressed in submandibular gland and parotid gland.

It is found in the secreted. In terms of biological role, thiol protease inhibitor. The chain is Cystatin-SA (CST2) from Homo sapiens (Human).